Consider the following 93-residue polypeptide: Putative protein adenylyltransferase MJ0435 (93 aa).

Positions glycine 26–aspartate 40 match the GSX(10)DXD motif motif. Positions 38, 40, and 70 each coordinate Mg(2+).

It belongs to the MntA antitoxin family. Probably forms a complex with cognate toxin MJ0434. Mg(2+) is required as a cofactor.

The catalysed reaction is L-tyrosyl-[protein] + ATP = O-(5'-adenylyl)-L-tyrosyl-[protein] + diphosphate. The enzyme catalyses O-(5'-adenylyl)-L-tyrosyl-[protein] + ATP = O-[5'-(adenylyl-(5'-&gt;3')-adenylyl)]-L-tyrosyl-[protein] + diphosphate. Its function is as follows. Probable antitoxin component of a putative type VII toxin-antitoxin (TA) system. Neutralizes cognate toxic MJ0434 by di-AMPylation. This Methanocaldococcus jannaschii (strain ATCC 43067 / DSM 2661 / JAL-1 / JCM 10045 / NBRC 100440) (Methanococcus jannaschii) protein is Putative protein adenylyltransferase MJ0435.